A 360-amino-acid polypeptide reads, in one-letter code: Geranylgeranyl pyrophosphate synthase 12, chloroplastic (360 aa).

A chloroplast-targeting transit peptide spans M1 to S39. Isopentenyl diphosphate-binding residues include K106, R109, and H138. Mg(2+) is bound by residues D145 and D151. Residue R156 participates in dimethylallyl diphosphate binding. An isopentenyl diphosphate-binding site is contributed by R157. Dimethylallyl diphosphate is bound by residues K245, T246, Q283, K300, and K310.

The protein belongs to the FPP/GGPP synthase family. In terms of assembly, monomer. Requires Mg(2+) as cofactor.

Its subcellular location is the plastid. It is found in the chloroplast. It catalyses the reaction isopentenyl diphosphate + dimethylallyl diphosphate = (2E)-geranyl diphosphate + diphosphate. The catalysed reaction is isopentenyl diphosphate + (2E)-geranyl diphosphate = (2E,6E)-farnesyl diphosphate + diphosphate. The enzyme catalyses isopentenyl diphosphate + (2E,6E)-farnesyl diphosphate = (2E,6E,10E)-geranylgeranyl diphosphate + diphosphate. It participates in isoprenoid biosynthesis; farnesyl diphosphate biosynthesis; farnesyl diphosphate from geranyl diphosphate and isopentenyl diphosphate: step 1/1. Its pathway is isoprenoid biosynthesis; geranyl diphosphate biosynthesis; geranyl diphosphate from dimethylallyl diphosphate and isopentenyl diphosphate: step 1/1. It functions in the pathway isoprenoid biosynthesis; geranylgeranyl diphosphate biosynthesis; geranylgeranyl diphosphate from farnesyl diphosphate and isopentenyl diphosphate: step 1/1. Catalyzes the trans-addition of the three molecules of IPP onto DMAPP to form geranylgeranyl pyrophosphate. The chain is Geranylgeranyl pyrophosphate synthase 12, chloroplastic from Arabidopsis thaliana (Mouse-ear cress).